Consider the following 286-residue polypeptide: Polyamine aminopropyltransferase (286 aa).

Residues 5-238 (TMWHETLHDQ…GIMTFAWATD (234 aa)) enclose the PABS domain. An S-methyl-5'-thioadenosine-binding site is contributed by glutamine 33. The spermidine site is built by histidine 64 and aspartate 88. S-methyl-5'-thioadenosine-binding positions include glutamate 108 and 140–141 (DG). Catalysis depends on aspartate 158, which acts as the Proton acceptor. 158–161 (DCTD) is a spermidine binding site. Proline 165 is an S-methyl-5'-thioadenosine binding site.

The protein belongs to the spermidine/spermine synthase family. Homodimer or homotetramer.

The protein resides in the cytoplasm. The enzyme catalyses S-adenosyl 3-(methylsulfanyl)propylamine + putrescine = S-methyl-5'-thioadenosine + spermidine + H(+). Its pathway is amine and polyamine biosynthesis; spermidine biosynthesis; spermidine from putrescine: step 1/1. Functionally, catalyzes the irreversible transfer of a propylamine group from the amino donor S-adenosylmethioninamine (decarboxy-AdoMet) to putrescine (1,4-diaminobutane) to yield spermidine. The sequence is that of Polyamine aminopropyltransferase from Salmonella arizonae (strain ATCC BAA-731 / CDC346-86 / RSK2980).